The sequence spans 444 residues: Xaa-Pro dipeptidase (444 aa).

Positions 247, 258, 340, 385, and 424 each coordinate Mn(2+).

The protein belongs to the peptidase M24B family. Bacterial-type prolidase subfamily. It depends on Mn(2+) as a cofactor.

It carries out the reaction Xaa-L-Pro dipeptide + H2O = an L-alpha-amino acid + L-proline. Its function is as follows. Splits dipeptides with a prolyl residue in the C-terminal position. In Proteus mirabilis (strain HI4320), this protein is Xaa-Pro dipeptidase.